Reading from the N-terminus, the 88-residue chain is Phosphocarrier protein HPr (88 aa).

One can recognise an HPr domain in the interval methionine 1 to glutamate 88. The Pros-phosphohistidine intermediate role is filled by histidine 15. Residue serine 46 is modified to Phosphoserine; by HPrK/P.

It belongs to the HPr family.

It is found in the cytoplasm. Its activity is regulated as follows. Phosphorylation on Ser-46 inhibits the phosphoryl transfer from enzyme I to HPr. In terms of biological role, general (non sugar-specific) component of the phosphoenolpyruvate-dependent sugar phosphotransferase system (sugar PTS). This major carbohydrate active-transport system catalyzes the phosphorylation of incoming sugar substrates concomitantly with their translocation across the cell membrane. The phosphoryl group from phosphoenolpyruvate (PEP) is transferred to the phosphoryl carrier protein HPr by enzyme I. Phospho-HPr then transfers it to the PTS EIIA domain. Its function is as follows. P-Ser-HPr interacts with the catabolite control protein A (CcpA), forming a complex that binds to DNA at the catabolite response elements cre, operator sites preceding a large number of catabolite-regulated genes. Thus, P-Ser-HPr is a corepressor in carbon catabolite repression (CCR), a mechanism that allows bacteria to coordinate and optimize the utilization of available carbon sources. P-Ser-HPr also plays a role in inducer exclusion, in which it probably interacts with several non-PTS permeases and inhibits their transport activity. The protein is Phosphocarrier protein HPr (ptsH) of Latilactobacillus sakei (Lactobacillus sakei).